The primary structure comprises 406 residues: Putative colanic acid biosynthesis glycosyltransferase WcaL (406 aa).

This sequence belongs to the glycosyltransferase group 1 family. Glycosyltransferase 4 subfamily.

The protein operates within slime biogenesis; slime polysaccharide biosynthesis. The protein is Putative colanic acid biosynthesis glycosyltransferase WcaL (wcaL) of Escherichia coli (strain K12).